Reading from the N-terminus, the 386-residue chain is Bifunctional chorismate mutase/prephenate dehydratase (386 aa).

Residues 1–92 (MTSENPLLAL…DSVLTQQALL (92 aa)) form the Chorismate mutase domain. Substrate-binding residues include arginine 11, arginine 28, lysine 39, aspartate 48, glutamate 52, serine 84, and glutamine 88. Residues 105-285 (RIAFLGPKGS…NFTRFVVLAR (181 aa)) enclose the Prephenate dehydratase domain. Residues 299–376 (TLLMATGQQA…RSMKVLGCYP (78 aa)) enclose the ACT domain.

It is found in the cytoplasm. It catalyses the reaction chorismate = prephenate. It carries out the reaction prephenate + H(+) = 3-phenylpyruvate + CO2 + H2O. The protein operates within amino-acid biosynthesis; L-phenylalanine biosynthesis; phenylpyruvate from prephenate: step 1/1. It participates in metabolic intermediate biosynthesis; prephenate biosynthesis; prephenate from chorismate: step 1/1. Its function is as follows. Catalyzes the Claisen rearrangement of chorismate to prephenate and the decarboxylation/dehydration of prephenate to phenylpyruvate. The chain is Bifunctional chorismate mutase/prephenate dehydratase (pheA) from Escherichia coli O157:H7.